The primary structure comprises 61 residues: MALKIRQIKGTVGRKQNQRDTLRSLGLKRIGQEVIREDNSVTRGMVHTVRHLVEVEEVAGE.

Belongs to the universal ribosomal protein uL30 family. As to quaternary structure, part of the 50S ribosomal subunit.

This chain is Large ribosomal subunit protein uL30, found in Corynebacterium urealyticum (strain ATCC 43042 / DSM 7109).